Reading from the N-terminus, the 301-residue chain is MENIPTVGLGTWKASPGEVTDAVKLAINLGYRHFDCAYLYHNESEVGMGISEKIKEGVVKREDLFVVSKLWCTCHKKSLVKTACTNTLEALNLDYLDLYLIHWPMGFKPGEKDIPLDRNGKVIPSHTSFLDTWEAMEDLVFEGLVKNLGVSNFNHEQLERLLDKPGLRVRPITNQIECHPYLNQKKLIDFCHKRNVSVTAYRPLGGSGGGFHLMDDTVIRKIAKKHGKSPAQILIRFQIQRNLIVIPKSVTPSRIRENIQVFDFELTEKDMEELLSLDKNLRLATFPTTENHQDYPFHIEY.

Asp35 contributes to the NADP(+) binding site. Residue Tyr40 is the Proton donor of the active site. His102 is a binding site for substrate. Residues Gln175 and 246–258 (IPKSVTPSRIREN) contribute to the NADP(+) site.

The protein belongs to the aldo/keto reductase family. As to quaternary structure, monomer.

The protein resides in the cytoplasm. It catalyses the reaction 1,5-anhydro-D-glucitol + NADP(+) = 1,5-anhydro-D-fructose + NADPH + H(+). Inhibited by p-chloromercuribenzoic acid and alkyliodines. Catalyzes the NADPH-dependent reduction of 1,5-anhydro-D-fructose (AF) to 1,5-anhydro-D-glucitol. The protein is 1,5-anhydro-D-fructose reductase (Akr1e2) of Mus musculus (Mouse).